The primary structure comprises 774 residues: Acetyl-CoA decarbonylase/synthase complex subunit alpha (774 aa).

Residues Cys73, Cys76, Cys77, Cys79, Cys84, and Cys94 each contribute to the [4Fe-4S] cluster site. His117 lines the CO pocket. The [Ni-4Fe-4S] cluster site is built by His251, Cys279, and Cys318. 2 4Fe-4S ferredoxin-type domains span residues Leu398–Ala427 and Phe436–Thr466. 8 residues coordinate [4Fe-4S] cluster: Cys408, Cys411, Cys414, Cys418, Cys446, Cys449, Cys452, and Cys456. The [Ni-4Fe-4S] cluster site is built by Cys514, Cys543, and Cys578.

This sequence belongs to the Ni-containing carbon monoxide dehydrogenase family. In terms of assembly, heterotetramer of two alpha and two epsilon subunits. The ACDS complex is made up of alpha, epsilon, beta, gamma and delta subunits with a probable stoichiometry of (alpha(2)epsilon(2))(4)-beta(8)-(gamma(1)delta(1))(8). The cofactor is [4Fe-4S] cluster. It depends on [Ni-4Fe-4S] cluster as a cofactor.

The catalysed reaction is CO + 2 oxidized [2Fe-2S]-[ferredoxin] + H2O = 2 reduced [2Fe-2S]-[ferredoxin] + CO2 + 2 H(+). Part of the ACDS complex that catalyzes the reversible cleavage of acetyl-CoA, allowing autotrophic growth from CO(2). The alpha-epsilon subcomponent functions as a carbon monoxide dehydrogenase. The protein is Acetyl-CoA decarbonylase/synthase complex subunit alpha of Methanocaldococcus jannaschii (strain ATCC 43067 / DSM 2661 / JAL-1 / JCM 10045 / NBRC 100440) (Methanococcus jannaschii).